Consider the following 777-residue polypeptide: Glucocorticoid receptor (777 aa).

Over residues 1-14 (MDSKESLTPGREEN) the composition is skewed to basic and acidic residues. The disordered stretch occupies residues 1–23 (MDSKESLTPGREENPSSVLAQER). A modulating region spans residues 1–420 (MDSKESLTPG…TATTGPPPKL (420 aa)). Thr8 is subject to Phosphothreonine. Arg23 is modified (omega-N-methylarginine). Phosphoserine occurs at positions 45, 113, 134, and 141. Residues 130–140 (NRSTSVPENPK) show a composition bias toward polar residues. The disordered stretch occupies residues 130–183 (NRSTSVPENPKSSASTAVSAAPTEKEFPKTHSDISSEQQHLKGQTGTNGGNVKL). A compositionally biased stretch (low complexity) spans 141 to 150 (SSASTAVSAA). Residues 152–163 (TEKEFPKTHSDI) show a composition bias toward basic and acidic residues. The segment covering 164–174 (SSEQQHLKGQT) has biased composition (polar residues). A phosphoserine mark is found at Ser203, Ser211, and Ser226. Lys258 participates in a covalent cross-link: Glycyl lysine isopeptide (Lys-Gly) (interchain with G-Cter in SUMO2). Ser267 carries the phosphoserine modification. Glycyl lysine isopeptide (Lys-Gly) (interchain with G-Cter in SUMO); alternate cross-links involve residues Lys277 and Lys293. Glycyl lysine isopeptide (Lys-Gly) (interchain with G-Cter in SUMO2); alternate cross-links involve residues Lys277 and Lys293. Residues 394–414 (SSPSMRPDVSSPPSSSSTATT) show a composition bias toward low complexity. A disordered region spans residues 394–415 (SSPSMRPDVSSPPSSSSTATTG). Ser404 is subject to Phosphoserine. A Glycyl lysine isopeptide (Lys-Gly) (interchain with G-Cter in ubiquitin) cross-link involves residue Lys419. NR C4-type zinc fingers lie at residues 421–441 (CLVC…CGSC) and 457–476 (CAGR…CPAC). A DNA-binding region (nuclear receptor) is located at residues 421-486 (CLVCSDEASG…RYRKCLQAGM (66 aa)). Lys480, Lys492, Lys494, and Lys495 each carry N6-acetyllysine. The interval 485–777 (GMNLEARKTK…NIKKLLFHQK (293 aa)) is interaction with CLOCK. A hinge region spans residues 487–523 (NLEARKTKKKIKGIQQATTGVSQETPENPANKTIVPA). Residues 524–758 (TLPQLTPTLV…FPEMLAEIIT (235 aa)) form the NR LBD domain. The interaction with CRY1 stretch occupies residues 532–697 (LVSLLEVIEP…EIRMTYIKEL (166 aa)). A Glycyl lysine isopeptide (Lys-Gly) (interchain with G-Cter in SUMO) cross-link involves residue Lys703.

It belongs to the nuclear hormone receptor family. NR3 subfamily. As to quaternary structure, heteromultimeric cytoplasmic complex with HSP90AA1, HSPA1A/HSPA1B, and FKBP5 or another immunophilin such as PPID, STIP1, or the immunophilin homolog PPP5C. Upon ligand binding FKBP5 dissociates from the complex and FKBP4 takes its place, thereby linking the complex to dynein and mediating transport to the nucleus, where the complex dissociates. Probably forms a complex composed of chaperones HSP90 and HSP70, co-chaperones CDC37, PPP5C, TSC1 and client protein TSC2, CDK4, AKT, RAF1 and NR3C1; this complex does not contain co-chaperones STIP1/HOP and PTGES3/p23. Directly interacts with UNC45A. Binds to DNA as a homodimer, and as heterodimer with NR3C2 or the retinoid X receptor. Binds STAT5A and STAT5B homodimers and heterodimers. Interacts with NRIP1, POU2F1, POU2F2 and TRIM28. Interacts with several coactivator complexes, including the SMARCA4 complex, CREBBP/EP300, TADA2L (Ada complex) and p160 coactivators such as NCOA2 and NCOA6. Interaction with BAG1 inhibits transactivation. Interacts with HEXIM1 and TGFB1I1. Interacts with NCOA1. Interacts with NCOA3, SMARCA4, SMARCC1, SMARCD1, and SMARCE1. Interacts with CLOCK, CRY1 and CRY2 in a ligand-dependent fashion. Interacts with CIART. Interacts with RWDD3. Interacts with UBE2I/UBC9 and this interaction is enhanced in the presence of RWDD3. Interacts with GRIP1. Interacts with NR4A3 (via nuclear receptor DNA-binding domain), represses transcription activity of NR4A3 on the POMC promoter Nur response element (NurRE). Directly interacts with PNRC2 to attract and form a complex with UPF1 and DCP1A; the interaction leads to rapid mRNA degradation. Interacts with GSK3B. Interacts with FNIP1 and FNIP2. Interacts (via C-terminus) with HNRNPU (via C-terminus). Interacts with MCM3AP. Interacts (via domain NR LBD) with HSP90AA1 and HSP90AB1. In the absence of hormonal ligand, interacts with TACC1. Interacts (via NR LBD domain) with ZNF764 (via KRAB domain); the interaction regulates transcription factor activity of NR3C1 by directing its actions toward certain biologic pathways. In terms of processing, acetylation by CLOCK reduces its binding to glucocorticoid response elements and its transcriptional activity. Increased proteasome-mediated degradation in response to glucocorticoids. Post-translationally, phosphorylated in the absence of hormone; becomes hyperphosphorylated in the presence of glucocorticoid. The Ser-203, Ser-226 and Ser-404-phosphorylated forms are mainly cytoplasmic, and the Ser-211-phosphorylated form is nuclear. Phosphorylation at Ser-211 increases transcriptional activity. Phosphorylation at Ser-203, Ser-226 and Ser-404 decreases signaling capacity. Phosphorylation at Ser-404 may protect from glucocorticoid-induced apoptosis. Phosphorylation at Ser-203 and Ser-211 is not required in regulation of chromosome segregation. May be dephosphorylated by PPP5C, attenuates NR3C1 action. In terms of processing, ubiquitinated by UBR5, leading to its degradation: UBR5 specifically recognizes and binds ligand-bound NR3C1 when it is not associated with coactivators (NCOAs). In presence of NCOAs, the UBR5-degron is not accessible, preventing its ubiquitination and degradation. Sumoylation at Lys-277 and Lys-293 negatively regulates its transcriptional activity. Sumoylation at Lys-703 positively regulates its transcriptional activity in the presence of RWDD3. Sumoylation at Lys-277 and Lys-293 is dispensable whereas sumoylation at Lys-703 is critical for the stimulatory effect of RWDD3 on its transcriptional activity. Heat shock increases sumoylation in a RWDD3-dependent manner.

Its subcellular location is the cytoplasm. It is found in the nucleus. The protein localises to the mitochondrion. The protein resides in the cytoskeleton. It localises to the spindle. Its subcellular location is the microtubule organizing center. It is found in the centrosome. The protein localises to the chromosome. The protein resides in the nucleoplasm. Receptor for glucocorticoids (GC). Has a dual mode of action: as a transcription factor that binds to glucocorticoid response elements (GRE), both for nuclear and mitochondrial DNA, and as a modulator of other transcription factors. Affects inflammatory responses, cellular proliferation and differentiation in target tissues. Involved in chromatin remodeling. Plays a role in rapid mRNA degradation by binding to the 5' UTR of target mRNAs and interacting with PNRC2 in a ligand-dependent manner which recruits the RNA helicase UPF1 and the mRNA-decapping enzyme DCP1A, leading to RNA decay. Could act as a coactivator for STAT5-dependent transcription upon growth hormone (GH) stimulation and could reveal an essential role of hepatic GR in the control of body growth. Mediates glucocorticoid-induced apoptosis. Promotes accurate chromosome segregation during mitosis. May act as a tumor suppressor. May play a negative role in adipogenesis through the regulation of lipolytic and antilipogenic gene expression. This is Glucocorticoid receptor (NR3C1) from Pongo abelii (Sumatran orangutan).